Here is a 1732-residue protein sequence, read N- to C-terminus: Lys-gingipain W83 (1732 aa).

The N-terminal stretch at 1–24 (MRKLLLLIAASLLGVGLYAQSAKI) is a signal peptide. Positions 25 to 228 (KLDAPTTRTT…ETAYKQLFNR (204 aa)) are excised as a propeptide. Ca(2+) is bound by residues aspartate 313, aspartate 337, aspartate 339, phenylalanine 341, and glutamate 343. Histidine 444 (proton donor) is an active-site residue. Cysteine 477 functions as the Nucleophile in the catalytic mechanism. Residues phenylalanine 482 and glutamate 491 each coordinate Ca(2+). Positions 965-988 (DAPNGTPNPNPNPNPNPGTTLSES) are disordered. Positions 970–980 (TPNPNPNPNPN) are enriched in pro residues. Ca(2+) is bound by residues serine 988, glutamate 990, aspartate 1001, aspartate 1003, aspartate 1005, histidine 1007, serine 1022, glycine 1024, asparagine 1043, aspartate 1146, glutamate 1147, aspartate 1433, glutamate 1435, aspartate 1446, aspartate 1448, aspartate 1450, asparagine 1452, serine 1470, isoleucine 1472, asparagine 1490, and aspartate 1595.

It belongs to the peptidase C25 family. Proteolytically cleaved into a catalytic subunit and three adhesins. Arg-gingipain is involved in this post-translational processing.

Its subcellular location is the secreted. It catalyses the reaction Endopeptidase with strict specificity for lysyl bonds.. Functionally, cysteine proteinase with a strong preference for substrates with Lys in the P1 position. Hydrolyzes bovine hemoglobin, bovine serum albumin, casein, human placental type I collagen and human IgA and IgG. Disrupts the functions of polymorphonuclear leukocytes. May act as a virulence factor in the development of peridontal disease. Involved in the coaggregation of P.gingivalis with other oral bacteria. Has hemolytic activity; this is mediated by the adhesin domains and does not require the catalytic domain. This Porphyromonas gingivalis (Bacteroides gingivalis) protein is Lys-gingipain W83.